The chain runs to 357 residues: S-adenosylmethionine decarboxylase proenzyme (357 aa).

Residues glutamate 11 and glutamate 14 contribute to the active site. The active-site Schiff-base intermediate with substrate; via pyruvic acid is serine 71. The residue at position 71 (serine 71) is a Pyruvic acid (Ser); by autocatalysis. The active-site Proton donor; for catalytic activity is the cysteine 85. Catalysis depends on proton acceptor; for processing activity residues serine 234 and histidine 247.

The protein belongs to the eukaryotic AdoMetDC family. The cofactor is pyruvate. Post-translationally, is synthesized initially as an inactive proenzyme. Formation of the active enzyme involves a self-maturation process in which the active site pyruvoyl group is generated from an internal serine residue via an autocatalytic post-translational modification. Two non-identical subunits are generated from the proenzyme in this reaction, and the pyruvate is formed at the N-terminus of the alpha chain, which is derived from the carboxyl end of the proenzyme. The post-translation cleavage follows an unusual pathway, termed non-hydrolytic serinolysis, in which the side chain hydroxyl group of the serine supplies its oxygen atom to form the C-terminus of the beta chain, while the remainder of the serine residue undergoes an oxidative deamination to produce ammonia and the pyruvoyl group blocking the N-terminus of the alpha chain.

The enzyme catalyses S-adenosyl-L-methionine + H(+) = S-adenosyl 3-(methylsulfanyl)propylamine + CO2. It functions in the pathway amine and polyamine biosynthesis; S-adenosylmethioninamine biosynthesis; S-adenosylmethioninamine from S-adenosyl-L-methionine: step 1/1. In Catharanthus roseus (Madagascar periwinkle), this protein is S-adenosylmethionine decarboxylase proenzyme (SAMDC).